Here is a 161-residue protein sequence, read N- to C-terminus: NADH-quinone oxidoreductase subunit I (161 aa).

4Fe-4S ferredoxin-type domains lie at 52 to 82 and 92 to 121; these read LRRY…IESS and TRYD…QGPN. [4Fe-4S] cluster-binding residues include C62, C65, C68, C72, C101, C104, C107, and C111.

The protein belongs to the complex I 23 kDa subunit family. In terms of assembly, NDH-1 is composed of 14 different subunits. Subunits NuoA, H, J, K, L, M, N constitute the membrane sector of the complex. It depends on [4Fe-4S] cluster as a cofactor.

It localises to the cell inner membrane. The enzyme catalyses a quinone + NADH + 5 H(+)(in) = a quinol + NAD(+) + 4 H(+)(out). Functionally, NDH-1 shuttles electrons from NADH, via FMN and iron-sulfur (Fe-S) centers, to quinones in the respiratory chain. The immediate electron acceptor for the enzyme in this species is believed to be ubiquinone. Couples the redox reaction to proton translocation (for every two electrons transferred, four hydrogen ions are translocated across the cytoplasmic membrane), and thus conserves the redox energy in a proton gradient. The sequence is that of NADH-quinone oxidoreductase subunit I from Pelagibacter ubique (strain HTCC1062).